The following is a 212-amino-acid chain: Redox-sensing transcriptional repressor Rex (212 aa).

A DNA-binding region (H-T-H motif) is located at residues 17 to 56; sequence LYARSLRYLLEEGIHSVSSQELGERINVTAAQIRKDLSYF. 91–96 contacts NAD(+); the sequence is GIGLLG.

It belongs to the transcriptional regulatory Rex family. As to quaternary structure, homodimer.

The protein resides in the cytoplasm. Modulates transcription in response to changes in cellular NADH/NAD(+) redox state. In Chloroflexus aggregans (strain MD-66 / DSM 9485), this protein is Redox-sensing transcriptional repressor Rex.